A 181-amino-acid chain; its full sequence is ATP synthase subunit delta (181 aa).

This sequence belongs to the ATPase delta chain family. F-type ATPases have 2 components, F(1) - the catalytic core - and F(0) - the membrane proton channel. F(1) has five subunits: alpha(3), beta(3), gamma(1), delta(1), epsilon(1). F(0) has three main subunits: a(1), b(2) and c(10-14). The alpha and beta chains form an alternating ring which encloses part of the gamma chain. F(1) is attached to F(0) by a central stalk formed by the gamma and epsilon chains, while a peripheral stalk is formed by the delta and b chains.

The protein localises to the cell inner membrane. F(1)F(0) ATP synthase produces ATP from ADP in the presence of a proton or sodium gradient. F-type ATPases consist of two structural domains, F(1) containing the extramembraneous catalytic core and F(0) containing the membrane proton channel, linked together by a central stalk and a peripheral stalk. During catalysis, ATP synthesis in the catalytic domain of F(1) is coupled via a rotary mechanism of the central stalk subunits to proton translocation. Functionally, this protein is part of the stalk that links CF(0) to CF(1). It either transmits conformational changes from CF(0) to CF(1) or is implicated in proton conduction. This is ATP synthase subunit delta from Chlorobaculum tepidum (strain ATCC 49652 / DSM 12025 / NBRC 103806 / TLS) (Chlorobium tepidum).